The primary structure comprises 287 residues: Protein PXR1 (287 aa).

In terms of domain architecture, G-patch spans 25 to 72; sequence TSRFGHLQLEKFGWKPGMGLGMSPTSSHKTHIKVSIKDDNLGLGAKIK. Positions 143 to 155 are enriched in basic and acidic residues; sequence LKSYSNDKKRSRD. The segment at 143–254 is disordered; the sequence is LKSYSNDKKR…TTASNIPSTV (112 aa). Basic residues predominate over residues 163 to 190; the sequence is SKNKSKKQKKDKKDKKDKKDKKDKKDKK. The span at 191-200 shows a compositional bias: basic and acidic residues; sequence DKKDKTEKKE. Over residues 201 to 220 the composition is skewed to basic residues; the sequence is KKEKKEKKEKKEKKDKKDKK. Over residues 221-230 the composition is skewed to basic and acidic residues; sequence DKKDKIDKKD. Polar residues predominate over residues 239 to 251; that stretch reads NNIEVSTTASNIP.

The protein belongs to the PINX1 family.

The protein localises to the nucleus. The protein resides in the nucleolus. Involved in rRNA-processing at A0, A1 and A2 sites and negatively regulates telomerase. The chain is Protein PXR1 (PXR1) from Vanderwaltozyma polyspora (strain ATCC 22028 / DSM 70294 / BCRC 21397 / CBS 2163 / NBRC 10782 / NRRL Y-8283 / UCD 57-17) (Kluyveromyces polysporus).